The chain runs to 701 residues: Elongation factor G (701 aa).

A tr-type G domain is found at 8–290; the sequence is ERYRNIGISA…AVVDYLPAPT (283 aa). Residues 17–24, 88–92, and 142–145 contribute to the GTP site; these read AHIDAGKT, DTPGH, and NKMD.

It belongs to the TRAFAC class translation factor GTPase superfamily. Classic translation factor GTPase family. EF-G/EF-2 subfamily.

Its subcellular location is the cytoplasm. In terms of biological role, catalyzes the GTP-dependent ribosomal translocation step during translation elongation. During this step, the ribosome changes from the pre-translocational (PRE) to the post-translocational (POST) state as the newly formed A-site-bound peptidyl-tRNA and P-site-bound deacylated tRNA move to the P and E sites, respectively. Catalyzes the coordinated movement of the two tRNA molecules, the mRNA and conformational changes in the ribosome. In Aeromonas hydrophila subsp. hydrophila (strain ATCC 7966 / DSM 30187 / BCRC 13018 / CCUG 14551 / JCM 1027 / KCTC 2358 / NCIMB 9240 / NCTC 8049), this protein is Elongation factor G.